An 874-amino-acid chain; its full sequence is MKVSDIRSKFLQFFESKGHTVVRSSSLVPANDPTLLFTNSGMVQFKDVFLGTDKRPYTRATSAQRSVRAGGKHNDLENVGYTARHHTFFEMLGNFSFGDYFKRDAILYAWELLTKTYQLPAEKLWVTVYAEDDEAYDIWAKEVGVPAERIVRIGDNKGARYASDNFWQMADTGPCGPCSEIFYDHGPDVWGGPPGSPEEDGDRYIEVWNLVFMQFNRDEQGNMTPLPKPCVDTGMGLERIAAVLQHVHSNYEIDLFQALIKAAARETHIDNLNQNSLKVIADHIRACSFLIVDGVIPGNEGRGYVLRRIIRRAIRHGYKLGQKTPFFHKMVADLVEQMGQAYPELAEAQSRVTEVLKAEEERFFETIENGMSILDAALADLKLKGGKTLDGELAFKLHDTFGFPLDLTQDVCREQEIGVDEAAFDAAMNRQREQARAAGKFKMAAGLEYTGDKTVFHGYEKLELPQARVTALYVDGAAVNAMQPGQTGVVVLDNTPFYAESGGQAGDQGVLKAGNAVFAVTDTTKIQADVFGHQGTLEGGALKVGDAVSAQVDAQRRARTVRNHSATHLMHKALREVLGSHVQQKGSLVDADKTRFDFSHNAALTDEQIRRVEEIVNAEILRNDDTHAEIMPFDDAVKSGAMALFGEKYADDVRVLSIGTSKELCGGTHVHRTGDIGLFKIVVEGGVAAGIRRVEAITGDNALHYLQGLDARLNEAAAVLKAQPSELVPRIGQVQDQVRALEKELERLKSKLAASQGDELAAQAVDIKGLKVLAAQLDGADVKTLRETMDKLKDKLKSAAIVLGAVSDGKVSLIAGVTADATGKVKAGELVNFVAQQVGGKGGGRPDMAQAGGTEPAKLPQALAGVGEWVAGKI.

Zn(2+) contacts are provided by H564, H568, C665, and H669.

Belongs to the class-II aminoacyl-tRNA synthetase family. Requires Zn(2+) as cofactor.

Its subcellular location is the cytoplasm. The catalysed reaction is tRNA(Ala) + L-alanine + ATP = L-alanyl-tRNA(Ala) + AMP + diphosphate. Catalyzes the attachment of alanine to tRNA(Ala) in a two-step reaction: alanine is first activated by ATP to form Ala-AMP and then transferred to the acceptor end of tRNA(Ala). Also edits incorrectly charged Ser-tRNA(Ala) and Gly-tRNA(Ala) via its editing domain. The sequence is that of Alanine--tRNA ligase from Cupriavidus necator (strain ATCC 17699 / DSM 428 / KCTC 22496 / NCIMB 10442 / H16 / Stanier 337) (Ralstonia eutropha).